Here is a 71-residue protein sequence, read N- to C-terminus: MFTYHSANTSAAQPALVNAIEQGLRAELGVVTEDDILMELTKWVEASDNDILSDIYQQTINYVVSGQHPTL.

The chain is Protein bdm homolog (bdm) from Salmonella typhi.